The chain runs to 230 residues: uncharacterized protein (230 aa).

The 68-residue stretch at 2–69 (HRLAKIISNA…KPRLWIYYKP (68 aa)) folds into the S4 RNA-binding domain. Catalysis depends on aspartate 102, which acts as the Nucleophile.

This sequence belongs to the pseudouridine synthase RsuA family.

It catalyses the reaction a uridine in RNA = a pseudouridine in RNA. This is an uncharacterized protein from Rickettsia conorii (strain ATCC VR-613 / Malish 7).